A 103-amino-acid chain; its full sequence is Pyrimidine/purine nucleoside phosphorylase (103 aa).

It belongs to the nucleoside phosphorylase PpnP family.

It carries out the reaction a purine D-ribonucleoside + phosphate = a purine nucleobase + alpha-D-ribose 1-phosphate. It catalyses the reaction adenosine + phosphate = alpha-D-ribose 1-phosphate + adenine. The enzyme catalyses cytidine + phosphate = cytosine + alpha-D-ribose 1-phosphate. The catalysed reaction is guanosine + phosphate = alpha-D-ribose 1-phosphate + guanine. It carries out the reaction inosine + phosphate = alpha-D-ribose 1-phosphate + hypoxanthine. It catalyses the reaction thymidine + phosphate = 2-deoxy-alpha-D-ribose 1-phosphate + thymine. The enzyme catalyses uridine + phosphate = alpha-D-ribose 1-phosphate + uracil. The catalysed reaction is xanthosine + phosphate = alpha-D-ribose 1-phosphate + xanthine. In terms of biological role, catalyzes the phosphorolysis of diverse nucleosides, yielding D-ribose 1-phosphate and the respective free bases. Can use uridine, adenosine, guanosine, cytidine, thymidine, inosine and xanthosine as substrates. Also catalyzes the reverse reactions. The polypeptide is Pyrimidine/purine nucleoside phosphorylase (Cupriavidus metallidurans (strain ATCC 43123 / DSM 2839 / NBRC 102507 / CH34) (Ralstonia metallidurans)).